Reading from the N-terminus, the 598-residue chain is Protein VASCULAR ASSOCIATED DEATH 1, chloroplastic (598 aa).

A compositionally biased stretch (polar residues) spans 1-11 (MAMLSTASVSG). Positions 1 to 64 (MAMLSTASVS…PSRGGDNQSE (64 aa)) are disordered. The transit peptide at 1–68 (MAMLSTASVS…GDNQSEVISK (68 aa)) directs the protein to the chloroplast. A glycan (N-linked (GlcNAc...) asparagine) is linked at Asn61. Residues 70 to 134 (EEYRQLFRLP…PFAEISCVKR (65 aa)) form the GRAM domain. Residues 272 to 444 (DFTKVAEAKF…MAHELLKQKK (173 aa)) form the VASt domain. Asn329 and Asn494 each carry an N-linked (GlcNAc...) asparagine glycan. Residues 507 to 527 (QVIVLAFAVILLMQVTIVVLL) traverse the membrane as a helical segment. A coiled-coil region spans residues 553 to 595 (WLEKRMHFLREEMMMVEDRLQRMRQDHAALKAQFHHLERLLRR).

It localises to the membrane. It is found in the plastid. The protein resides in the chloroplast. Functionally, involved in ethylene- and salicylic acid-dependent cell death control associated with cells in the vicinity of vascular bundles. The sequence is that of Protein VASCULAR ASSOCIATED DEATH 1, chloroplastic from Arabidopsis thaliana (Mouse-ear cress).